Reading from the N-terminus, the 325-residue chain is D-alanine--D-alanine ligase (325 aa).

One can recognise an ATP-grasp domain in the interval K107 to K311. Position 137 to 192 (V137 to T192) interacts with ATP. Residues D264, E278, and N280 each contribute to the Mg(2+) site.

Belongs to the D-alanine--D-alanine ligase family. Mg(2+) is required as a cofactor. Requires Mn(2+) as cofactor.

The protein resides in the cytoplasm. The catalysed reaction is 2 D-alanine + ATP = D-alanyl-D-alanine + ADP + phosphate + H(+). It participates in cell wall biogenesis; peptidoglycan biosynthesis. In terms of biological role, cell wall formation. The polypeptide is D-alanine--D-alanine ligase (Polaromonas naphthalenivorans (strain CJ2)).